Here is a 2924-residue protein sequence, read N- to C-terminus: MGNAPSNSSEDEAAAAGGEGWSPHQDWAADSGTTPGPGPAAAVLPSAAALLEPARLREAAAALRPAPPCESLVSRHHGALLRWLEERLGRGEESVTLEQFRELLEARGAGCSGEQFEEAFAQFDAEGDGTVDAENMLEALKNSSGANLQGELSHVIRQLQACSLVPGFIDIFSESKEGLGIHSSMILRFLHRNRISSMVIPYPMLDHCNNMCTMRSSVLKESLDQLVQKEKESPGDLARSPEMDKLKSVTKCYAYIETSSNPADIYRMTNGETSSYWQSDGSARSHWIRLKMKPDVVLRHLSIAVAATDQSYMPQQVTVAVGRSASDLQEVRDVHIPSNVTGYVTLLENANISQLYVQINIKRCLSDGCDTRIHGLRAVGFQRVKKSGVSVSDASAIWYWSLLTSLVTASMETNPAFVQTVLHNTQKALQHMPPLSLSPGSTDFSTFLSPNVLEEVDSFLIRITSCCSTPEVELTLLAFALARGSIAKVMSSLCTITDHLDTQYDASSLISSMASVRQNLLLKYGKPLQLTLQACDVKGKEDKSGPENLLVEPWTRDGFLTETGKTRASTIFSTGSDSAFQVTQIRIMVRRGGIGAQCGLVFAYNSPSNKFHAEEHFKRFEKYDKWKLQELRQFVKSRIGCSSDDLGEDDPIGWFELEEEWDEADVKLQQCRVAKFLMVKFLCTRQESAERLGVQGLSISGYLRPARAEAEQSILYAHCRRDTENIHGATLLLRTLQFIQQLSHDLMQQKESGLKHKSFLDFAGLDLQIFWKFYSKLKQNRREECICAQTLLLKLLQSCFSVLQGDPQAASEEEKPTAQRSEGIQAAKELYTHLCNVVDKPNGNSMPMEILKQEVRNTLLNGAAIFFPDRQTRRSQLFTMMKSVTEHERKQSLQLTFHSLCTYFSDKDPGGLLLLPEKSDLATMNTSEVLAVMNTLLSVAARECELLMLNRSHGAVGSVLFSLFWSVQGSLLSWCFLQLKSTDAAAKELAMDLIEKYVGQFLASMRVILESLLSQYSGKTIVEKLCNSVFSMAARQLVIFLLDFCTLDVSHCTLLREFSTLTELLKKLCSDPEGGLSKLDVETWQQEQPVVLHTWTKESTHNYENNCHEVSVFISPGATYFEVEFDERCETEKRYDYLEFTDSRGGKTRYDTKVGTYKWPKKVTFKDGPRLQFLFHSDSSNNEWGYKFTVTAYGLPDVAVSWGLDLQLLVSRLMGRLASQCMALKSVHQLGSNMAVSQAKLTSVLNSPLWKPVFRHQICPELELEASWPTHPHKDGKEVKNIPDDPCRHFLLDFAQSEPAQNFCGPYSELFKGFIQACRKQAPKTDIVAGSTIDQAVNATFAALVYRTPDLYEKLQKYVNSGGKIALTEEFSQVYSLADGIRIWMLEMKQKSLLSLGNDSEEKRGLEAAEVNPESLAKECIQKSLLLLKFLPMSKSSKENCDKLETVDETDHLQPLDRRQRTSSVVEEHFQGSASPTEAATPAAGDRSPALEIQPKLLPSSGPCVAEVSTAEEPSPPSTPTRRPPFTRGRLRLLSFRSMEETRPVPTVKEKYPVLKDVMDFIKDQSLSHESVVKVLSLRKAQGQSILEVLRIIQYCTESLGQPHCFHPPYILFLLELLTCQKDFTNYFGHLEGCGADLHREIRDTYYQLVLFLVKAIKRFSSINDRSLLPALSCVQTALLHLLDMGWEPSDLAFFVDIQLPDLLMNMSQENISVHDSVISQWSEEDELADAKQNSEWMDECQDGMFEAWYEKIAQEDPEKQRKMHMFIARYCDLLNVDISCDGCDEIAPWHRYRCLQCSDMDLCKTCFLGGVKPEGHGDDHEMVNMEFTCDHCQGLIIGRRMNCNVCDDFDLCYGCYTAKKYSYGHLPTHSITAHPMVTIRISDRQRLIQPYIHNYSWLLFAALALYSAHLTSTEQVDGEQLDPQARTNAATLRSQCMQLVGDCLMKAHQGKGLKALALLGVLPDGDSTSENQALPVTVSFQASEEQADAGLLVPCNGKRAADTEVRPLDYKQKKKAGEDLSIVKDPSCQTQVSDAPASAHVPPGLPDAEHPEVSAQVLVEEKAITPNPEQVFAECSQKRILGLLAAMLPPIKSGPTVPLIDLEHVLPLMFQVVISNAGHLNETYHLTLGLLGQLIIRLQPAEVDAAVMKVLSAKHNLRVGLDWACSMAEILRSLNNAPLWRDVIATFTDHCIKQLPFQLKHTNIFTLLVLVGFPQVLCVGTRCVYMDNANEPHNVIILKHFTEKNRAVIVDVKTRKRKTVKDYQLVQKGGGQECGTSQSQLSQYSQHFAFIASHLLQTSMDSHCPEAVEATWVLSLALKGLYKTLKAHGFEETHATFLQTDLLKLLVKKCSKGTGFSKTWLLRDLEILSIMLYSSKKEINTLAEHGDLELDERGDQEEELDRPVSSPGEAEQKKLDPLENLDEPTRICFLMAHDALNAPLHILRAIYELQMKKTDSFFLEVQKRFDGDELTTDERIRSLAQRWQPSRSLRLEEQSAKAVDTDMIILPCLSRPARSDQATPESNPVTQKLISSTESELQQSYAKQRRSKSAALLHKELNCKSKRAIRDYLFRVNEATSVLYARHVLASLLAEWPGHVPVSEDILELSGPAHMTYILDMFMQLEEKHQWEKILQKVLQGCRENMLGTMALAACQFMEEPGMEVQVRESKHSYNNNTSFEDKVHIPGAIYLSIKFDPQRNTEEGCDELAMSSSSDFQQDRHNFSGSQQKWKDFELPGDTLYYRFTSDMSNTEWGYRFTVTAGHLGRFQTGFEILKQMLSEERVVPHLALGKIWEWLVGVACRQTGHQRLKAIHLLLRIVQCCSHSDLCDLGLLKPLWQLFTHMEYGLFEDVTQPGILLPLHRALTELFFVTENRAQELGLLQEYLLALTTEDHLLRCAAQALQNIAAISLAINYPNKATRLWNVEC.

The interval 1-41 (MGNAPSNSSEDEAAAAGGEGWSPHQDWAADSGTTPGPGPAA) is disordered. Glycine 2 carries N-myristoyl glycine lipidation. Residues 28–41 (AADSGTTPGPGPAA) are compositionally biased toward low complexity. In terms of domain architecture, EF-hand spans 111–146 (CSGEQFEEAFAQFDAEGDGTVDAENMLEALKNSSGA). A DOC domain is found at 226 to 405 (LVQKEKESPG…AIWYWSLLTS (180 aa)). Serine 240 bears the Phosphoserine mark. Over residues 1452-1470 (HLQPLDRRQRTSSVVEEHF) the composition is skewed to basic and acidic residues. The segment at 1452-1527 (HLQPLDRRQR…STPTRRPPFT (76 aa)) is disordered. Residues 1472-1485 (GSASPTEAATPAAG) are compositionally biased toward low complexity. Residues serine 1475, serine 1488, and serine 1509 each carry the phosphoserine modification. At threonine 1510 the chain carries Phosphothreonine. Over residues 1514-1523 (PSPPSTPTRR) the composition is skewed to pro residues. Serine 1515 is modified (phosphoserine). Phosphothreonine is present on residues threonine 1519 and threonine 1521. Serine 1535 and serine 1538 each carry phosphoserine. ZZ-type zinc fingers lie at residues 1776–1831 (NVDI…FTCD) and 1825–1880 (NMEF…MVTI). Cysteine 1781, cysteine 1784, cysteine 1795, cysteine 1798, cysteine 1804, cysteine 1807, histidine 1817, histidine 1821, cysteine 1830, cysteine 1833, cysteine 1844, cysteine 1847, cysteine 1853, cysteine 1856, histidine 1866, and histidine 1870 together coordinate Zn(2+). Positions 2388–2418 (DLELDERGDQEEELDRPVSSPGEAEQKKLDP) are disordered. Phosphoserine is present on serine 2407. Lysine 2630 carries the N6-acetyllysine modification.

As to quaternary structure, interacts with KLF6 and KLF9. Interacts via (ZZ-type 2 zinc finger) with histone H3 trimethylated at 'Lys-4' (H3K4me3) and histone H3 acetylated at 'Lys-4' (H3K4ac).

Functionally, histone H3 reader which may act as a transcriptional coactivator for KLF6 and KLF9 transcription factors. The sequence is that of Zinc finger ZZ-type and EF-hand domain-containing protein 1 (Zzef1) from Mus musculus (Mouse).